The chain runs to 602 residues: Elongation factor 4 (602 aa).

In terms of domain architecture, tr-type G spans 7–189 (ARLRNFCIIA…SVVDRIPPPK (183 aa)). Residues 19–24 (DHGKST) and 136–139 (NKVD) contribute to the GTP site.

This sequence belongs to the TRAFAC class translation factor GTPase superfamily. Classic translation factor GTPase family. LepA subfamily.

Its subcellular location is the cell inner membrane. It catalyses the reaction GTP + H2O = GDP + phosphate + H(+). Its function is as follows. Required for accurate and efficient protein synthesis under certain stress conditions. May act as a fidelity factor of the translation reaction, by catalyzing a one-codon backward translocation of tRNAs on improperly translocated ribosomes. Back-translocation proceeds from a post-translocation (POST) complex to a pre-translocation (PRE) complex, thus giving elongation factor G a second chance to translocate the tRNAs correctly. Binds to ribosomes in a GTP-dependent manner. This chain is Elongation factor 4, found in Prochlorococcus marinus (strain SARG / CCMP1375 / SS120).